We begin with the raw amino-acid sequence, 462 residues long: Zinc transporter zipt-7.2 (462 aa).

Residues 2–22 (LVKSCIFLSFLAIAAYGQAHL) traverse the membrane as a helical segment. The segment at 39 to 134 (HHQGHGHAHG…HGHSHGAESA (96 aa)) is disordered. Basic residues predominate over residues 40–51 (HQGHGHAHGGHG). Low complexity predominate over residues 65–74 (AAAAEAATAA). Positions 75 to 94 (AHDHGHAHDHDHGHAHDHGH) are enriched in basic and acidic residues. The span at 111–120 (HGHAHDHHGH) shows a compositional bias: basic residues. Residues 121-132 (SHEDHGHSHGAE) show a composition bias toward basic and acidic residues. Residues 161–181 (AISATLLISAAPCFILMFIPI) traverse the membrane as a helical segment. An N-linked (GlcNAc...) asparagine glycan is attached at N184. A helical membrane pass occupies residues 194–214 (VLLAFGSGGLLGDAFLHLIPH). Residues 219–239 (GDGHGHSHSHGHSHGGGGHSH) are disordered. Residues 244 to 264 (MSVGGWVLGGIIAFLTVEKLV) form a helical membrane-spanning segment. The segment at 270–307 (EDGHGHSHGHSHGGEKKETKEKDSKDKVAKKEEKPEKD) is disordered. The span at 281–307 (HGGEKKETKEKDSKDKVAKKEEKPEKD) shows a compositional bias: basic and acidic residues. N326 carries N-linked (GlcNAc...) asparagine glycosylation. 3 helical membrane passes run 333-353 (IGASFIAGTTVGIVTMITVLV), 376-396 (AMLIQLVTALGALSGCVISLF), and 410-430 (SWVLPFTAGGFIYIATVSVIP). N435 is a glycosylation site (N-linked (GlcNAc...) asparagine). The helical transmembrane segment at 441-461 (TVKEIFAILTGIFLMYLIAIY) threads the bilayer.

It belongs to the ZIP transporter (TC 2.A.5) family. KE4/Catsup subfamily. Expressed in somatic tissues.

The protein resides in the membrane. Its function is as follows. Zinc transporter. This is Zinc transporter zipt-7.2 from Caenorhabditis elegans.